Consider the following 478-residue polypeptide: Islet cell autoantigen 1 (478 aa).

One can recognise an AH domain in the interval 50–253 (ASDADLDAKL…TSHTMAAIHE (204 aa)). The span at 306–317 (EHKDSSAYKTEE) shows a compositional bias: basic and acidic residues. 2 disordered regions span residues 306–365 (EHKD…SGDK) and 398–422 (LKEP…GFLP).

In terms of tissue distribution, predominantly expressed in brain, pancreas and stomach mucosa. High expression also found in stomach muscle and testis.

Its subcellular location is the cytoplasm. The protein localises to the cytosol. It is found in the golgi apparatus membrane. It localises to the cytoplasmic vesicle. The protein resides in the secretory vesicle membrane. Its subcellular location is the secretory vesicle. The protein localises to the synaptic vesicle membrane. Functionally, may play a role in neurotransmitter secretion. The polypeptide is Islet cell autoantigen 1 (Mus musculus (Mouse)).